Reading from the N-terminus, the 523-residue chain is Acetyl-CoA hydrolase (523 aa).

277-281 (GIGNI) serves as a coordination point for CoA. Glu302 serves as the catalytic 5-glutamyl coenzyme A thioester intermediate. Residues Asn392 and Gly396 each coordinate CoA.

Belongs to the acetyl-CoA hydrolase/transferase family.

The protein resides in the cytoplasm. It carries out the reaction acetyl-CoA + H2O = acetate + CoA + H(+). Functionally, presumably involved in regulating the intracellular acetyl-CoA pool for fatty acid and cholesterol synthesis and fatty acid oxidation. This chain is Acetyl-CoA hydrolase (ACH1), found in Kluyveromyces lactis (strain ATCC 8585 / CBS 2359 / DSM 70799 / NBRC 1267 / NRRL Y-1140 / WM37) (Yeast).